The sequence spans 169 residues: Disulfide bond formation protein B (169 aa).

Residues 1–8 lie on the Cytoplasmic side of the membrane; that stretch reads MRLSVRWV. Residues 9-25 form a helical membrane-spanning segment; the sequence is FFLGFFLCALMLAIAGY. The Periplasmic segment spans residues 26–43; the sequence is FQFVENLEPCPLCILSRV. Residues C35 and C38 are joined by a disulfide bond. Residues 44 to 60 traverse the membrane as a helical segment; it reads AVLAIGGVFLVAALHNP. The Cytoplasmic portion of the chain corresponds to 61-67; sequence KSWGIKV. Residues 68-84 form a helical membrane-spanning segment; that stretch reads YALLGFVVTLIGIGITG. Topologically, residues 85-141 are periplasmic; it reads RHVWLQSLPADQVPACGPGLNFMLDNFPLTETLELVFRGSGECAEVQWSFLGLTIPG. A disulfide bond links C100 and C127. The helical transmembrane segment at 142 to 160 threads the bilayer; it reads WTLVAFLFLGVISLWQMGR. Over 161-169 the chain is Cytoplasmic; it reads TGGGAGKLT.

It belongs to the DsbB family.

The protein resides in the cell inner membrane. Functionally, required for disulfide bond formation in some periplasmic proteins. Acts by oxidizing the DsbA protein. The chain is Disulfide bond formation protein B from Nitrosococcus oceani (strain ATCC 19707 / BCRC 17464 / JCM 30415 / NCIMB 11848 / C-107).